The following is a 416-amino-acid chain: Gamma-glutamyl phosphate reductase (416 aa).

The protein belongs to the gamma-glutamyl phosphate reductase family.

It localises to the cytoplasm. It carries out the reaction L-glutamate 5-semialdehyde + phosphate + NADP(+) = L-glutamyl 5-phosphate + NADPH + H(+). It functions in the pathway amino-acid biosynthesis; L-proline biosynthesis; L-glutamate 5-semialdehyde from L-glutamate: step 2/2. Its function is as follows. Catalyzes the NADPH-dependent reduction of L-glutamate 5-phosphate into L-glutamate 5-semialdehyde and phosphate. The product spontaneously undergoes cyclization to form 1-pyrroline-5-carboxylate. In Salmonella paratyphi C (strain RKS4594), this protein is Gamma-glutamyl phosphate reductase.